Consider the following 558-residue polypeptide: Acylase ACY 1 proenzyme (558 aa).

The active-site Nucleophile is the threonine 368.

It belongs to the gamma-glutamyltransferase family. In terms of assembly, dimer of two non-identical chains processed from the same precursor.

It catalyses the reaction (7R)-7-(4-carboxybutanamido)cephalosporanate + H2O = (7R)-7-aminocephalosporanate + glutarate. The catalysed reaction is an N-terminal (5-L-glutamyl)-[peptide] + an alpha-amino acid = 5-L-glutamyl amino acid + an N-terminal L-alpha-aminoacyl-[peptide]. The enzyme catalyses glutathione + H2O = L-cysteinylglycine + L-glutamate. It carries out the reaction an S-substituted glutathione + H2O = an S-substituted L-cysteinylglycine + L-glutamate. In terms of biological role, besides the cephalosporin acylase I activity which converts GL-7ACA into 7-ACA; this enzyme displays some gamma glutamyltranspeptidase activity. The protein is Acylase ACY 1 proenzyme (acyI) of Pseudomonas sp. (strain V22).